The chain runs to 823 residues: Pentatricopeptide repeat-containing protein At4g33990 (823 aa).

PPR repeat units follow at residues 85 to 115 (NVCI…IQNR), 116 to 151 (DVYA…GLTP), 152 to 183 (DYRT…GFMW), 184 to 214 (DVYV…MPVR), 215 to 249 (DMGS…DSVT), 252 to 280 (SLLS…GLES), 281 to 311 (ELFV…MYVR), 312 to 346 (DLIS…RIQP), 347 to 381 (DCLT…GWFL), 383 to 413 (DITI…LPNT), 414 to 448 (DVIS…GEIA), 450 to 484 (NQGT…GLYL), 485 to 515 (DVFV…IPRV), 516 to 550 (NSVP…GVKP), 551 to 581 (DHIT…MQTD), and 587 to 617 (SLKH…MSLQ). The type E motif stretch occupies residues 622-697 (IWGALLSACR…TPGWSSMEVD (76 aa)). Positions 698 to 728 (NKVEVFYTGNQTHPMYEEMYRELTALQAKLK) are type E(+) motif. A type DYW motif region spans residues 729–823 (MIGYVPDHRF…NGVCSCGDYW (95 aa)).

The protein belongs to the PPR family. PCMP-H subfamily.

The polypeptide is Pentatricopeptide repeat-containing protein At4g33990 (EMB2758) (Arabidopsis thaliana (Mouse-ear cress)).